A 389-amino-acid chain; its full sequence is Lipid-A-disaccharide synthase (389 aa).

This sequence belongs to the LpxB family.

The enzyme catalyses a lipid X + a UDP-2-N,3-O-bis[(3R)-3-hydroxyacyl]-alpha-D-glucosamine = a lipid A disaccharide + UDP + H(+). The protein operates within bacterial outer membrane biogenesis; LPS lipid A biosynthesis. In terms of biological role, condensation of UDP-2,3-diacylglucosamine and 2,3-diacylglucosamine-1-phosphate to form lipid A disaccharide, a precursor of lipid A, a phosphorylated glycolipid that anchors the lipopolysaccharide to the outer membrane of the cell. In Burkholderia orbicola (strain MC0-3), this protein is Lipid-A-disaccharide synthase.